We begin with the raw amino-acid sequence, 151 residues long: Homeobox protein HD-1 (151 aa).

Positions 87–146 (ESIKSRRFPKFITEALERSFEIDQYPSEAEKARLAKICKLSTKQINNWFTNKRNRTKGHE) form a DNA-binding region, homeobox.

The protein localises to the nucleus. The chain is Homeobox protein HD-1 (HD-1) from Encephalitozoon cuniculi (strain GB-M1) (Microsporidian parasite).